A 1032-amino-acid chain; its full sequence is Putative oxidoreductase YgfK (1032 aa).

Residues 928–958 (RFQTLHLDAYCNECGNCAQFCPWNGKPYKDK) enclose the 4Fe-4S ferredoxin-type domain. [4Fe-4S] cluster contacts are provided by Cys938, Cys941, Cys944, and Cys948.

[4Fe-4S] cluster serves as cofactor.

Functionally, could be an iron-sulfur flavoprotein with NADPH:O(2) oxidoreductase activity. The polypeptide is Putative oxidoreductase YgfK (ygfK) (Escherichia coli O157:H7).